A 407-amino-acid polypeptide reads, in one-letter code: MSSNPSLFSRIIHGSLVLQIIVGIALAVILASVSASAASQVAFLGDFFVGALKAIAPILVFVLVASSIANQKKNSHTNMRPIISLYLIGTFAAALTAVLLSFSFPTTLVLVTGIEGSNPPQGIAEVLNTLLFKLVDNPVNALMTGNYIGILAWGIGLGIALHHGTDATKAVLNDISHGVSQMVRFVIRLAPLGIFGLVAGTVAATGFDALAGYAQLLMVLVGAMLIMALVVNPLIVYLKIKRNPYPLVLKCLRGSGVTAFFTRSSAANIPVNMALCEELKLHEDTYSVSIPLGATVNMGGAAITITVLTLAAAHTLGVQVDFVTALLLSVMASVAACGASGVAGGSLLLIPLACSLFGISNDIAMQVVAVGFIIGVVQDSAETALNSSTDVLFTAAACEAAEAKANS.

9 consecutive transmembrane segments (helical) span residues 11 to 31 (IIHG…VILA), 43 to 63 (FLGD…VFVL), 82 to 102 (IISL…LLSF), 141 to 161 (ALMT…GIAL), 192 to 212 (LGIF…ALAG), 216 to 236 (LLMV…PLIV), 298 to 318 (MGGA…TLGV), 339 to 359 (ASGV…LFGI), and 363 to 383 (IAMQ…SAET).

This sequence belongs to the dicarboxylate/amino acid:cation symporter (DAACS) (TC 2.A.23) family.

It is found in the cell inner membrane. It catalyses the reaction L-serine(in) + Na(+)(in) = L-serine(out) + Na(+)(out). The catalysed reaction is L-threonine(in) + Na(+)(in) = L-threonine(out) + Na(+)(out). Functionally, involved in the import of serine and threonine into the cell, with the concomitant import of sodium (symport system). This chain is Serine/threonine transporter SstT, found in Shewanella denitrificans (strain OS217 / ATCC BAA-1090 / DSM 15013).